Consider the following 166-residue polypeptide: CDP-archaeol synthase (166 aa).

The next 5 membrane-spanning stretches (helical) occupy residues 7 to 27 (LLLS…GPFI), 55 to 75 (LIVA…FFTA), 78 to 98 (TLIS…GAFI), 116 to 136 (LDFV…ITWY), and 138 to 158 (FLFI…VAYL).

The protein belongs to the CDP-archaeol synthase family. Mg(2+) is required as a cofactor.

Its subcellular location is the cell membrane. It carries out the reaction 2,3-bis-O-(geranylgeranyl)-sn-glycerol 1-phosphate + CTP + H(+) = CDP-2,3-bis-O-(geranylgeranyl)-sn-glycerol + diphosphate. It participates in membrane lipid metabolism; glycerophospholipid metabolism. Its function is as follows. Catalyzes the formation of CDP-2,3-bis-(O-geranylgeranyl)-sn-glycerol (CDP-archaeol) from 2,3-bis-(O-geranylgeranyl)-sn-glycerol 1-phosphate (DGGGP) and CTP. This reaction is the third ether-bond-formation step in the biosynthesis of archaeal membrane lipids. In Saccharolobus islandicus (strain Y.N.15.51 / Yellowstone #2) (Sulfolobus islandicus), this protein is CDP-archaeol synthase.